Reading from the N-terminus, the 525-residue chain is Nucleolar and spindle-associated protein 1-A (525 aa).

Disordered stretches follow at residues 46–205 (ESKD…LHEA), 248–292 (EKTP…RFSA), 373–397 (TPESEPKQMLPSVKKNEPMATPEKA), and 451–525 (SLSR…VPVQ). Polar residues predominate over residues 58 to 69 (SSLTDTDELNSS). Positions 82 to 92 (THRRGRGRKPL) are enriched in basic residues. Positions 106-127 (SVGTGTESLASETDNTQDQNCL) are enriched in polar residues. The span at 160 to 169 (TTEKRQKKAS) shows a compositional bias: basic and acidic residues. Over residues 270–285 (PPTTGASPSRTPTNQR) the composition is skewed to polar residues. The span at 476 to 494 (CGSNNNVSVLKNNFKQPHL) shows a compositional bias: polar residues. Residues 495–514 (QTREDRRKQHEQDRKGKRDQ) are compositionally biased toward basic and acidic residues.

The protein belongs to the NUSAP family. Interacts with DNA. Interacts with microtubules, ipo7, kpna2 and kpnb1. Microtubule stabilization is inhibited by ipo7 and kpna2, while microtubule bundling is inhibited by kpnb1. Active GTP-bound ran causes dissociation of ipo7 and kpnb1.

The protein localises to the cytoplasm. The protein resides in the nucleus. It localises to the cytoskeleton. It is found in the spindle. Functionally, microtubule-associated protein with the capacity to bundle and stabilize microtubules. May associate with chromosomes and promote the organization of meiotic or mitotic spindle microtubules around them. The sequence is that of Nucleolar and spindle-associated protein 1-A (nusap1-a) from Xenopus laevis (African clawed frog).